The chain runs to 581 residues: Frizzled-10 (581 aa).

The N-terminal stretch at 1–20 (MQRPGPRLWLVLQVMGSCAA) is a signal peptide. The Extracellular segment spans residues 21–225 (ISSMDMERPG…DVYWSREDKR (205 aa)). An FZ domain is found at 29–150 (PGDGKCQPIE…NDPNYLCMEA (122 aa)). Disulfide bonds link cysteine 34-cysteine 95, cysteine 42-cysteine 88, cysteine 79-cysteine 117, cysteine 106-cysteine 147, and cysteine 110-cysteine 134. The N-linked (GlcNAc...) asparagine glycan is linked to asparagine 48. Asparagine 153 is a glycosylation site (N-linked (GlcNAc...) asparagine). The chain crosses the membrane as a helical span at residues 226-246 (FAVVWLAIWAVLCFFSSAFTV). Topologically, residues 247-262 (LTFLIDPARFRYPERP) are cytoplasmic. A helical transmembrane segment spans residues 263–283 (IIFLSMCYCVYSVGYLIRLFA). The Extracellular segment spans residues 284–311 (GAESIACDRDSGQLYVIQEGLESTGCTL). A helical membrane pass occupies residues 312 to 332 (VFLVLYYFGMASSLWWVVLTL). Residues 333–351 (TWFLAAGKKWGHEAIEANS) lie on the Cytoplasmic side of the membrane. Residues 352-372 (SYFHLAAWAIPAVKTILILVM) traverse the membrane as a helical segment. Topologically, residues 373 to 393 (RRVAGDELTGVCYVGSMDVNA) are extracellular. The chain crosses the membrane as a helical span at residues 394-414 (LTGFVLIPLACYLVIGTSFIL). The Cytoplasmic portion of the chain corresponds to 415 to 443 (SGFVALFHIRRVMKTGGENTDKLEKLMVR). The chain crosses the membrane as a helical span at residues 444–464 (IGLFSVLYTVPATCVIACYFY). Over 465–502 (ERLNMDYWKILAAQHKCKMNNQTKTLDCLMAASIPAVE) the chain is Extracellular. Asparagine 485 carries an N-linked (GlcNAc...) asparagine glycan. A helical membrane pass occupies residues 503–523 (IFMVKIFMLLVVGITSGMWIW). Residues 524-581 (TSKTLQSWQQVCSRRLKKKSRRKPASVITSGGIYKKAQHPQKTHHGKYEIPAQSPTCV) lie on the Cytoplasmic side of the membrane. The Lys-Thr-X-X-X-Trp motif, mediates interaction with the PDZ domain of Dvl family members motif lies at 526-531 (KTLQSW). Residues 560–581 (AQHPQKTHHGKYEIPAQSPTCV) are disordered. The PDZ-binding motif lies at 579–581 (TCV).

Belongs to the G-protein coupled receptor Fz/Smo family. In terms of assembly, interacts with WNT7B. Interacts with MYOC. Ubiquitinated by ZNRF3, leading to its degradation by the proteasome. In terms of tissue distribution, highest levels in the placenta and fetal kidney, followed by fetal lung and brain. In adult brain, abundantly expressed in the cerebellum, followed by cerebral cortex, medulla and spinal cord; very low levels in total brain, frontal lobe, temporal lobe and putamen. Weak expression detected in adult brain, heart, lung, skeletal muscle, pancreas, spleen and prostate.

It is found in the cell membrane. Its function is as follows. Receptor for Wnt proteins. Functions in the canonical Wnt/beta-catenin signaling pathway. The canonical Wnt/beta-catenin signaling pathway leads to the activation of disheveled proteins, inhibition of GSK-3 kinase, nuclear accumulation of beta-catenin and activation of Wnt target genes. A second signaling pathway involving PKC and calcium fluxes has been seen for some family members, but it is not yet clear if it represents a distinct pathway or if it can be integrated in the canonical pathway, as PKC seems to be required for Wnt-mediated inactivation of GSK-3 kinase. Both pathways seem to involve interactions with G-proteins. May be involved in transduction and intercellular transmission of polarity information during tissue morphogenesis and/or in differentiated tissues. In Homo sapiens (Human), this protein is Frizzled-10 (FZD10).